The sequence spans 1058 residues: Carbamoyl phosphate synthase large chain (1058 aa).

Residues 1-401 (MPKRTDIQKI…SLLKACRSLE (401 aa)) are carboxyphosphate synthetic domain. ATP is bound by residues R129, R169, G175, G176, R208, I210, E215, G241, I242, H243, Q284, and E298. The region spanning 133–327 (KQLMEELEQP…IAKLAAKIAV (195 aa)) is the ATP-grasp 1 domain. 3 residues coordinate Mg(2+): Q284, E298, and N300. Residues Q284, E298, and N300 each contribute to the Mn(2+) site. Residues 402–546 (IGVHHNEIPE…YSTYGWENES (145 aa)) are oligomerization domain. The interval 547-929 (IRSDKESVLV…ALYKAFEASY (383 aa)) is carbamoyl phosphate synthetic domain. The ATP-grasp 2 domain occupies 671-861 (EQALKELDIP…MAQVATKLIL (191 aa)). ATP contacts are provided by R707, S746, I748, E752, G777, V778, H779, S780, Q820, and E832. The Mg(2+) site is built by Q820, E832, and N834. Mn(2+) is bound by residues Q820, E832, and N834. The region spanning 930–1058 (LHLPTFGNVV…ESRSFVTEAI (129 aa)) is the MGS-like domain. Residues 930–1058 (LHLPTFGNVV…ESRSFVTEAI (129 aa)) form an allosteric domain region.

This sequence belongs to the CarB family. Composed of two chains; the small (or glutamine) chain promotes the hydrolysis of glutamine to ammonia, which is used by the large (or ammonia) chain to synthesize carbamoyl phosphate. Tetramer of heterodimers (alpha,beta)4. It depends on Mg(2+) as a cofactor. The cofactor is Mn(2+).

The enzyme catalyses hydrogencarbonate + L-glutamine + 2 ATP + H2O = carbamoyl phosphate + L-glutamate + 2 ADP + phosphate + 2 H(+). It catalyses the reaction hydrogencarbonate + NH4(+) + 2 ATP = carbamoyl phosphate + 2 ADP + phosphate + 2 H(+). Its pathway is amino-acid biosynthesis; L-arginine biosynthesis; carbamoyl phosphate from bicarbonate: step 1/1. It participates in pyrimidine metabolism; UMP biosynthesis via de novo pathway; (S)-dihydroorotate from bicarbonate: step 1/3. In terms of biological role, large subunit of the glutamine-dependent carbamoyl phosphate synthetase (CPSase). CPSase catalyzes the formation of carbamoyl phosphate from the ammonia moiety of glutamine, carbonate, and phosphate donated by ATP, constituting the first step of 2 biosynthetic pathways, one leading to arginine and/or urea and the other to pyrimidine nucleotides. The large subunit (synthetase) binds the substrates ammonia (free or transferred from glutamine from the small subunit), hydrogencarbonate and ATP and carries out an ATP-coupled ligase reaction, activating hydrogencarbonate by forming carboxy phosphate which reacts with ammonia to form carbamoyl phosphate. The sequence is that of Carbamoyl phosphate synthase large chain from Streptococcus pneumoniae (strain P1031).